Reading from the N-terminus, the 410-residue chain is E3 ubiquitin-protein ligase ICP0 (410 aa).

The RING-type zinc-finger motif lies at 46-85 (CPICLDVAATEAQTLPCMHKFCLDCIQRWTLTSTACPLCN). The segment at 243–410 (TSESEAHSDS…IFIDLTQDDD (168 aa)) is disordered. Positions 287–315 (APRRSPRRARRAAVLRREQRRTRCLRRGR) are enriched in basic residues. Composition is skewed to low complexity over residues 329–340 (SSGEGSSAQHGA) and 348–399 (GSAN…PRSA).

Auto-ubiquitinated.

It carries out the reaction S-ubiquitinyl-[E2 ubiquitin-conjugating enzyme]-L-cysteine + [acceptor protein]-L-lysine = [E2 ubiquitin-conjugating enzyme]-L-cysteine + N(6)-ubiquitinyl-[acceptor protein]-L-lysine.. Functionally, evades nuclear antiviral defenses triggered by dsDNA viruses. Acts during the initial stages of lytic infection and the reactivation of latent viral genome. Prevents the antiviral effect of nuclear bodies by degrading host PML and SP100. This chain is E3 ubiquitin-protein ligase ICP0 (EP0), found in Sus scrofa (Pig).